The chain runs to 343 residues: Heat-inducible transcription repressor HrcA (343 aa).

Belongs to the HrcA family.

Functionally, negative regulator of class I heat shock genes (grpE-dnaK-dnaJ and groELS operons). Prevents heat-shock induction of these operons. The protein is Heat-inducible transcription repressor HrcA of Thermoanaerobacter sp. (strain X514).